Here is a 302-residue protein sequence, read N- to C-terminus: Haloalkane dehalogenase (302 aa).

The 103-residue stretch at 48 to 150 (PVLLMHGEPS…AGLVIANTGL (103 aa)) folds into the AB hydrolase-1 domain. Residue aspartate 123 is the Nucleophile of the active site. The active-site Proton donor is aspartate 249. Histidine 278 serves as the catalytic Proton acceptor.

Belongs to the haloalkane dehalogenase family. Type 1 subfamily. As to quaternary structure, monomer.

It carries out the reaction 1-haloalkane + H2O = a halide anion + a primary alcohol + H(+). Functionally, catalyzes hydrolytic cleavage of carbon-halogen bonds in halogenated aliphatic compounds, leading to the formation of the corresponding primary alcohols, halide ions and protons. This chain is Haloalkane dehalogenase, found in Caulobacter sp. (strain K31).